The chain runs to 172 residues: Small ribosomal subunit protein uS5 (172 aa).

Residues 17–80 enclose the S5 DRBM domain; sequence LREKMIAVNR…EEARRNMVKV (64 aa).

The protein belongs to the universal ribosomal protein uS5 family. Part of the 30S ribosomal subunit. Contacts proteins S4 and S8.

Its function is as follows. With S4 and S12 plays an important role in translational accuracy. In terms of biological role, located at the back of the 30S subunit body where it stabilizes the conformation of the head with respect to the body. This is Small ribosomal subunit protein uS5 from Verminephrobacter eiseniae (strain EF01-2).